The following is a 939-amino-acid chain: MNEDQFPKAYDPKSSESGVYSFWERSGMFIADANSKKPAYSIVMPPPNVTGILHMGHALVNTLQDMLIRYKRMKGFEVCWVPGTDHAGIATQTVVERHLRSSLGKRRTDFSREEFLKHVWEWKEKSQNVILSQLRQLGCSCDWSRQRFTMDPEANRAVKKAFKVLFDKGVIYRGYYLVNWDPILQTALADDEVEYEEREGWLYYIRYPVVNSEEFITVATTRPETLLGDTAIAVSPEDERYSHLIGAKVIVPFVDREIPIIGDFSVDASFGTGAVKITPAHDKDDYRTGMNHRLPMINILTPTGEINENGGIFTGLAKESARENIITSLEALGLFVRKEAYSSRVGVSYRSGAIIEPYLSKQWFVSVDSFRESLREFVNSKEINLFPPEFIRNYLTWVNNLKDWCISRQLWWGHRIPVWHNKHDEEYVICFDGDGVPEEVAQDPESWYQDPDVLDTWFSSGLWPLTCFGWPEESADLRKFYPTSVLVTGHDILFFWVTRMVLMCSAMVDTKPFADVFLHGLIFGKSYKQYDDNGEWTYVSGDQKREYDKGKALPKNVVAKWEKLSKSKGNVIDPIEMIDMYGADAVRFTLCSCANRGEQIDLDYRLFEEYKNFVNKLWNGARFIFGHISELTSRDLEEGVNKDLLGLEDFYILDRFNELLALIDSHYNCYSFDKIAALAYDFFKNDLCSTYLEIIKPTLFGKQGNDEQRATKRKLLATLLVNILGVLHPIVPYITETLFQKIKTTLGVVGDGLGDAVTGHAVSMLRSEACMIAGYPQPIELSFPQGLRESFAIAEKLVYTIRNIRGEMQLDPRDLLQAFIISSEKKELLDACIPIMCALGGIKTIEQLSEAPKDCIFSLGVVEGIQVGVILPAEHLAKEHARLEKEKIRLENSIESLSKLLASEDFRTRANPNLVQAKEDALRNSRQELQSILDKIASL.

A 'HIGH' region motif is present at residues 47 to 57 (PNVTGILHMGH). The short motif at 563-567 (KLSKS) is the 'KMSKS' region element. Lysine 566 serves as a coordination point for ATP. The stretch at 873–939 (AEHLAKEHAR…QSILDKIASL (67 aa)) forms a coiled coil.

It belongs to the class-I aminoacyl-tRNA synthetase family. ValS type 1 subfamily. Monomer.

It is found in the cytoplasm. The enzyme catalyses tRNA(Val) + L-valine + ATP = L-valyl-tRNA(Val) + AMP + diphosphate. Its function is as follows. Catalyzes the attachment of valine to tRNA(Val). As ValRS can inadvertently accommodate and process structurally similar amino acids such as threonine, to avoid such errors, it has a 'posttransfer' editing activity that hydrolyzes mischarged Thr-tRNA(Val) in a tRNA-dependent manner. This Chlamydia muridarum (strain MoPn / Nigg) protein is Valine--tRNA ligase.